A 1330-amino-acid chain; its full sequence is MEFYESTYFIVLIPSVVITVIFLFFWLFMKETLYDEVLAKQKREQKLIPTKTDKKKAEKKKNKKKEIQNGNLHESDSESVPRDFKLSDALAVEDEQVVPIPLNVVETSSSVRERKKKEKKHKPVLEEQVTKESDVSKIPGKKVEPVPVTKQPTPPSEAAASKKKPGQKKSKNGSDDQDKKVETLMAPSKKQESLPLQQETKQESGSGKKKVSSKKQKAENVLVDEPLIHATTYIPLMDNADSNPVLDKREVIDLIKPDQVEGIQKTGAKKLKTETDKENAEVKFKDFLLSLKTMMFSEDEALCVVDLLKEKSGVIQDALKRSSKGELTALVHQLQEKDKLLAAVKEDAAVMKDRCKQLTQEMMSEKERSNVVIARMKDRIGTLEKEHNVFQNKMHVSYQETQQMQMKFQQVREQMEAEIAHLKQENGILRDAVSNTTNQLESKQSAELNKLRQDYARLVNELTEKTGKLQQEEVQKKNAEQAVTQLKVQLQEAERRWEEVQSYIRKRTAEHEAAQQDLQSKFVAKENEVQSLHSKLTDTLVSKQQLEQRLMQLMESEQKRVTKEESLQMQVQDILEQNEALKALIQQFHSQIAAQTSASVLAEELHKVIAEKDKQIKQTEDSLANEHDHLTSKEEELKDIQNMNFLLKAEVQKLQALANEQAAAAHELEKMQKSIHVKDDQIRLLEEQLQCEISNKMEEFKILNDQNKALQLEVQKLQILVSEQPNKDVVEQMEKCIQEKDEKLKTVEELLETGLIQVATKEEELNAIRTENSSLTKEVQDLKAKQNDQVSFASLVEELKKVIHEKDGKIKSVEELLEAEVLKVANKEKTIQDLKQEIEALKEEIGNIQLEKAQQLSITSQIQELQNLLKGKEEQMNTMKTVLEEKEKDLASRGKWLQDLQEENESLKTHIQEVAQHNLKEACSASRLEELETVLKEKENEMKRIETILKERENDLSSKIKLLQEVQDENKLFKSEIEQLKQCNYQQASSFPPHEELLKVISEREKEITGLQNELDSLKEAVEHQRKKNNDLREKNWEAMEALASTEKMLQDKVNKTSKVERQQYVEAIELEAKEVLKKLFPKVSVPPNLNYGEWLRGFEKKPKECVAETSGSEEVKVLEHKLKEADEMHTLLQLECEKYKSVLAETEGILQKLQRSVEQEENKWKVKVDESQKTIKQMQLSFTSSEQELERLRRENKDIENLRREREHLEMELEKAEIERSTYVTEVRELKTQLNETLTKLRTEQSERQKVAGDLHKAQQSLDLIQSKIVKAAGDTTVIENSDVSPEAESSEKETMSVSLNQTVTQLQQLLQAVNQQLTKEKEHYQVLE.

Topologically, residues 1–6 (MEFYES) are cytoplasmic. A helical; Signal-anchor for type II membrane protein transmembrane segment spans residues 7–29 (TYFIVLIPSVVITVIFLFFWLFM). The Lumenal portion of the chain corresponds to 30-1330 (KETLYDEVLA…KEKEHYQVLE (1301 aa)). Disordered regions lie at residues 49 to 81 (PTKT…ESVP) and 108 to 218 (SSSV…KQKA). Phosphoserine occurs at positions 75 and 77. Basic residues predominate over residues 113 to 122 (ERKKKEKKHK). Residues 123 to 135 (PVLEEQVTKESDV) are compositionally biased toward basic and acidic residues. At Thr153 the chain carries Phosphothreonine. Ser156 is modified (phosphoserine). The span at 161 to 171 (SKKKPGQKKSK) shows a compositional bias: basic residues. Residues Asn172, Asn435, Asn772, Asn904, and Asn1055 are each glycosylated (N-linked (GlcNAc...) asparagine). Positions 172–182 (NGSDDQDKKVE) are enriched in basic and acidic residues. Positions 332–1329 (HQLQEKDKLL…TKEKEHYQVL (998 aa)) form a coiled coil. Position 1085 is a phosphoserine (Ser1085). N-linked (GlcNAc...) asparagine glycosylation occurs at Asn1236. Phosphoserine is present on Ser1286. Asn1302 carries N-linked (GlcNAc...) asparagine glycosylation.

Belongs to the kinectin family. In terms of assembly, parallel homodimers formed between the membrane-bound and the cytosolic form, and also between 2 cytosolic forms. Expressed in male brain, heart, kidney, liver, lung, spleen and testis.

The protein localises to the endoplasmic reticulum membrane. Functionally, receptor for kinesin thus involved in kinesin-driven vesicle motility. The chain is Kinectin (KTN1) from Vulpes vulpes (Red fox).